A 375-amino-acid chain; its full sequence is GTPase HflX (375 aa).

The Hflx-type G domain occupies 194-371; sequence PHIAIVGYAS…RIATLLAGTK (178 aa). GTP-binding positions include 200-207, 225-229, 246-249, 314-317, and 349-351; these read GYASAGKT, FTTIT, DTVG, NKID, and SAK. The Mg(2+) site is built by threonine 207 and threonine 227.

The protein belongs to the TRAFAC class OBG-HflX-like GTPase superfamily. HflX GTPase family. As to quaternary structure, monomer. Associates with the 50S ribosomal subunit. Requires Mg(2+) as cofactor.

It localises to the cytoplasm. In terms of biological role, GTPase that associates with the 50S ribosomal subunit and may have a role during protein synthesis or ribosome biogenesis. This chain is GTPase HflX, found in Hyperthermus butylicus (strain DSM 5456 / JCM 9403 / PLM1-5).